Here is a 188-residue protein sequence, read N- to C-terminus: MSIKSDKWIRRMAEQHGMIEPFEPDQVRESDGRRIVSYGTSSYGYDIRCADEFKIFTNINSTIVDPKNFDEKSFVDFKGDVCIIPPNSFALARTMEYFRIPRTVLTVCLGKSTYARCGIIVNVTPFEPEWEGYVTLEFSNTTPLPAKIYAGEGCAQVLFFESDEECETSYKDRGGKYQGQHGVTLPKT.

Residues 111–116 (KSTYAR), 135–137 (TLE), Gln-156, Tyr-170, and Gln-180 contribute to the dCTP site. Catalysis depends on Glu-137, which acts as the Proton donor/acceptor.

The protein belongs to the dCTP deaminase family. In terms of assembly, homotrimer.

It carries out the reaction dCTP + H2O + H(+) = dUTP + NH4(+). It participates in pyrimidine metabolism; dUMP biosynthesis; dUMP from dCTP (dUTP route): step 1/2. Its function is as follows. Catalyzes the deamination of dCTP to dUTP. The polypeptide is dCTP deaminase (Ralstonia pickettii (strain 12J)).